Consider the following 132-residue polypeptide: Small ribosomal subunit protein uS8 (132 aa).

This sequence belongs to the universal ribosomal protein uS8 family. Part of the 30S ribosomal subunit. Contacts proteins S5 and S12.

One of the primary rRNA binding proteins, it binds directly to 16S rRNA central domain where it helps coordinate assembly of the platform of the 30S subunit. This Streptomyces avermitilis (strain ATCC 31267 / DSM 46492 / JCM 5070 / NBRC 14893 / NCIMB 12804 / NRRL 8165 / MA-4680) protein is Small ribosomal subunit protein uS8.